The following is a 386-amino-acid chain: Copper-containing nitrite reductase (386 aa).

The N-terminal stretch at 1–18 is a signal peptide; sequence MKRQALAAIIASMFALAA. Cys-19 carries N-palmitoyl cysteine lipidation. Cys-19 carries S-diacylglycerol cysteine lipidation. 2 Plastocyanin-like domains span residues 97 to 191 and 241 to 342; these read WTFD…ILVE and GHVG…LKVE. Positions 130, 135, 170, 171, 179, and 184 each coordinate Cu cation. His-135 provides a ligand contact to substrate. Position 276 (His-276) interacts with substrate. A Cu cation-binding site is contributed by His-325. Positions 363-386 are disordered; it reads GAAPAASAPAASAPAASAPAKSDY. Over residues 364–386 the composition is skewed to low complexity; the sequence is AAPAASAPAASAPAASAPAKSDY. 3 tandem repeats follow at residues 367–371, 372–376, and 377–381. The segment at 367–381 is 3 X 5 AA tandem repeats of A-A-S-A-P; it reads AASAPAASAPAASAP.

It belongs to the multicopper oxidase family. As to quaternary structure, homotrimer. Requires Cu(+) as cofactor. The cofactor is Cu(2+).

It is found in the cell outer membrane. It catalyses the reaction nitric oxide + Fe(III)-[cytochrome c] + H2O = Fe(II)-[cytochrome c] + nitrite + 2 H(+). Functionally, catalyzes the reduction of nitrite to nitric oxide (NO). It could be essential for growth and survival in oxygen-depleted environments. The protein is Copper-containing nitrite reductase (aniA) of Neisseria meningitidis serogroup A / serotype 4A (strain DSM 15465 / Z2491).